Reading from the N-terminus, the 385-residue chain is Probable thioesterase PNKD (385 aa).

The span at 31-42 shows a compositional bias: polar residues; that stretch reads NKASQNRSRALQ. The interval 31–57 is disordered; sequence NKASQNRSRALQSHSSPECKEEPEPLS. Positions 172, 174, 176, 177, 229, 253, and 291 each coordinate Zn(2+).

It belongs to the metallo-beta-lactamase superfamily. Glyoxalase II family. It depends on Zn(2+) as a cofactor. In terms of processing, undergoes cleavage at the N-terminus.

It localises to the cell membrane. It is found in the mitochondrion. The enzyme catalyses a thioester + H2O = a thiol + a carboxylate + H(+). Functionally, probable thioesterase that may play a role in cellular detoxification processes; it likely acts on a yet-unknown alpha-hydroxythioester substrate. In vitro, it is able to catalyze the hydrolysis of S-D-lactoyl-glutathione to form glutathione and D-lactic acid at very low rate, though this reaction is not physiologically relevant in vivo. This is Probable thioesterase PNKD (PNKD) from Bos taurus (Bovine).